The chain runs to 429 residues: Methylenetetrahydrofolate--tRNA-(uracil-5-)-methyltransferase TrmFO (429 aa).

FAD is bound at residue 7–12; the sequence is GAGLAG.

It belongs to the MnmG family. TrmFO subfamily. It depends on FAD as a cofactor.

Its subcellular location is the cytoplasm. It carries out the reaction uridine(54) in tRNA + (6R)-5,10-methylene-5,6,7,8-tetrahydrofolate + NADH + H(+) = 5-methyluridine(54) in tRNA + (6S)-5,6,7,8-tetrahydrofolate + NAD(+). The enzyme catalyses uridine(54) in tRNA + (6R)-5,10-methylene-5,6,7,8-tetrahydrofolate + NADPH + H(+) = 5-methyluridine(54) in tRNA + (6S)-5,6,7,8-tetrahydrofolate + NADP(+). Catalyzes the folate-dependent formation of 5-methyl-uridine at position 54 (M-5-U54) in all tRNAs. The polypeptide is Methylenetetrahydrofolate--tRNA-(uracil-5-)-methyltransferase TrmFO (Thermosipho africanus (strain TCF52B)).